A 406-amino-acid polypeptide reads, in one-letter code: Formate-dependent phosphoribosylglycinamide formyltransferase (406 aa).

N(1)-(5-phospho-beta-D-ribosyl)glycinamide is bound by residues 27 to 28 (EL) and Glu87. ATP-binding positions include Arg120, Lys162, 167 to 172 (SSGKGQ), 202 to 205 (EGFI), and Glu210. One can recognise an ATP-grasp domain in the interval 125–320 (RLAAETLGLP…EFELHARALL (196 aa)). Residues Glu279 and Glu291 each coordinate Mg(2+). N(1)-(5-phospho-beta-D-ribosyl)glycinamide-binding positions include Asp298, Lys367, and 374 to 375 (RR).

It belongs to the PurK/PurT family. Homodimer.

It catalyses the reaction N(1)-(5-phospho-beta-D-ribosyl)glycinamide + formate + ATP = N(2)-formyl-N(1)-(5-phospho-beta-D-ribosyl)glycinamide + ADP + phosphate + H(+). Its pathway is purine metabolism; IMP biosynthesis via de novo pathway; N(2)-formyl-N(1)-(5-phospho-D-ribosyl)glycinamide from N(1)-(5-phospho-D-ribosyl)glycinamide (formate route): step 1/1. Its function is as follows. Involved in the de novo purine biosynthesis. Catalyzes the transfer of formate to 5-phospho-ribosyl-glycinamide (GAR), producing 5-phospho-ribosyl-N-formylglycinamide (FGAR). Formate is provided by PurU via hydrolysis of 10-formyl-tetrahydrofolate. The polypeptide is Formate-dependent phosphoribosylglycinamide formyltransferase (Bordetella bronchiseptica (strain ATCC BAA-588 / NCTC 13252 / RB50) (Alcaligenes bronchisepticus)).